Consider the following 524-residue polypeptide: Probable malate:quinone oxidoreductase (524 aa).

This sequence belongs to the MQO family. It depends on FAD as a cofactor.

The catalysed reaction is (S)-malate + a quinone = a quinol + oxaloacetate. It participates in carbohydrate metabolism; tricarboxylic acid cycle; oxaloacetate from (S)-malate (quinone route): step 1/1. The chain is Probable malate:quinone oxidoreductase from Blochmanniella floridana.